Here is a 94-residue protein sequence, read N- to C-terminus: Large ribosomal subunit protein bL27 (94 aa).

The propeptide occupies 1-9; that stretch reads MLKLNLQFF.

It belongs to the bacterial ribosomal protein bL27 family. Post-translationally, the N-terminus is cleaved by ribosomal processing cysteine protease Prp.

The protein is Large ribosomal subunit protein bL27 of Staphylococcus epidermidis (strain ATCC 35984 / DSM 28319 / BCRC 17069 / CCUG 31568 / BM 3577 / RP62A).